The sequence spans 481 residues: UDP-N-acetylmuramoyl-L-alanyl-D-glutamate--L-lysine ligase (481 aa).

S42 provides a ligand contact to UDP-N-acetyl-alpha-D-muramoyl-L-alanyl-D-glutamate. 118-124 (GTKGKTT) is an ATP binding site. UDP-N-acetyl-alpha-D-muramoyl-L-alanyl-D-glutamate contacts are provided by residues Q158, 160-161 (TT), S187, and R195. The residue at position 229 (K229) is an N6-carboxylysine. An L-lysine recognition motif motif is present at residues 404 to 407 (DDPN).

This sequence belongs to the MurCDEF family. MurE subfamily. In terms of processing, carboxylation is probably crucial for Mg(2+) binding and, consequently, for the gamma-phosphate positioning of ATP.

The protein localises to the cytoplasm. It catalyses the reaction UDP-N-acetyl-alpha-D-muramoyl-L-alanyl-D-glutamate + L-lysine + ATP = UDP-N-acetyl-alpha-D-muramoyl-L-alanyl-gamma-D-glutamyl-L-lysine + ADP + phosphate + H(+). It functions in the pathway cell wall biogenesis; peptidoglycan biosynthesis. Its function is as follows. Catalyzes the addition of L-lysine to the nucleotide precursor UDP-N-acetylmuramoyl-L-alanyl-D-glutamate (UMAG) in the biosynthesis of bacterial cell-wall peptidoglycan. The chain is UDP-N-acetylmuramoyl-L-alanyl-D-glutamate--L-lysine ligase from Streptococcus pyogenes serotype M6 (strain ATCC BAA-946 / MGAS10394).